The primary structure comprises 402 residues: GTPase Obg (402 aa).

One can recognise an Obg domain in the interval 1–159; that stretch reads MRFIDEAIVT…KELKFELKVV (159 aa). Positions 160 to 334 constitute an OBG-type G domain; it reads ADVGLIGLPN…VKYHLMNEIE (175 aa). GTP is bound by residues 166–173, 191–195, 213–216, 283–286, and 315–317; these read GLPNAGKS, FTTLV, DIPG, NKID, and STL. Residues Ser173 and Thr193 each contribute to the Mg(2+) site. The segment at 382-402 is disordered; that stretch reads AAFNNELDDDDDDGVEVVYAP. The span at 387–396 shows a compositional bias: acidic residues; it reads ELDDDDDDGV.

This sequence belongs to the TRAFAC class OBG-HflX-like GTPase superfamily. OBG GTPase family. In terms of assembly, monomer. Requires Mg(2+) as cofactor.

The protein resides in the cytoplasm. Its function is as follows. An essential GTPase which binds GTP, GDP and possibly (p)ppGpp with moderate affinity, with high nucleotide exchange rates and a fairly low GTP hydrolysis rate. Plays a role in control of the cell cycle, stress response, ribosome biogenesis and in those bacteria that undergo differentiation, in morphogenesis control. This chain is GTPase Obg, found in Psychrobacter sp. (strain PRwf-1).